Reading from the N-terminus, the 328-residue chain is V-set and immunoglobulin domain-containing protein 2 (328 aa).

The first 24 residues, Met1–Ala24, serve as a signal peptide directing secretion. One can recognise an Ig-like V-type domain in the interval Val25–Ile138. Topologically, residues Val25–Ala244 are extracellular. Cysteines 46 and 122 form a disulfide. Asn139, Asn207, and Asn232 each carry an N-linked (GlcNAc...) asparagine glycan. Residues Pro145–Ser234 enclose the Ig-like C2-type domain. Residues Cys167 and Cys218 are joined by a disulfide bond. Residues Gly245–Ile265 form a helical membrane-spanning segment. Residues Arg266–Val328 are Cytoplasmic-facing.

As to expression, expressed in the stomach, colon and prostate.

The protein resides in the membrane. This is V-set and immunoglobulin domain-containing protein 2 (Vsig2) from Mus musculus (Mouse).